The sequence spans 319 residues: Ribonuclease Z (319 aa).

Residues His-62, His-64, Asp-66, His-67, His-145, Asp-215, and His-273 each coordinate Zn(2+). Residue Asp-66 is the Proton acceptor of the active site.

It belongs to the RNase Z family. As to quaternary structure, homodimer. Zn(2+) is required as a cofactor.

It carries out the reaction Endonucleolytic cleavage of RNA, removing extra 3' nucleotides from tRNA precursor, generating 3' termini of tRNAs. A 3'-hydroxy group is left at the tRNA terminus and a 5'-phosphoryl group is left at the trailer molecule.. Functionally, zinc phosphodiesterase, which displays some tRNA 3'-processing endonuclease activity. Probably involved in tRNA maturation, by removing a 3'-trailer from precursor tRNA. In Borrelia garinii subsp. bavariensis (strain ATCC BAA-2496 / DSM 23469 / PBi) (Borreliella bavariensis), this protein is Ribonuclease Z.